The chain runs to 529 residues: MPMSLGNAFIKNFLGKAPDWYKVAIISFLIINPIVFFFVDPFVAGWLLVVEFIFTLAMALKCYPLQPGGLLAIEAIAIGMTSPEQVKHELVANIEVLLLLVFMVAGIYFMKQLLLFIFTKILLGIRSKAILSLAFCFAAAFLSAFLDALTVIAVVISVAVGFYSIYHKVASGKGVSSDHDHTQDDHLAELTRDDLENYRAFLRSLLMHAGVGTALGGVTTMVGEPQNLIIADQASWLFGEFLIRMAPVTLPVFVCGLLTCFAVEKLKVFGYGAELPDNVRHILVEFDKEERKARTNQDVAKLWIQGLIAVWLIVGLALHLAAVGLIGLSVIILATAFTGVIEEHSLGKAFEEALPFTALLAVFFSIVAVIIDQELFKPVIDAVLAVEDKGTQLAMFYVANGLLSMVSDNVFVGTVYINEVKTALVEGIITRDQFDLLAVAINTGTNLPSVATPNGQAAFLFLLTSALAPLIRLSYGKMVIMALPYTIVLALVGLFGIVFLLEPMTTWFYDAGWIAHHVGEATHAVSGGH.

The next 12 membrane-spanning stretches (helical) occupy residues 13–33, 34–54, 90–110, 113–133, 149–166, 205–225, 241–261, 306–326, 327–347, 351–371, 451–471, and 479–499; these read FLGKAPDWYKVAIISFLIINP, IVFFFVDPFVAGWLLVVEFIF, LVANIEVLLLLVFMVAGIYFM, LLLFIFTKILLGIRSKAILSL, LTVIAVVISVAVGFYSIY, LLMHAGVGTALGGVTTMVGEP, FLIRMAPVTLPVFVCGLLTCF, GLIAVWLIVGLALHLAAVGLI, GLSVIILATAFTGVIEEHSLG, EEALPFTALLAVFFSIVAVII, ATPNGQAAFLFLLTSALAPLI, and VIMALPYTIVLALVGLFGIVF.

It belongs to the NhaB Na(+)/H(+) (TC 2.A.34) antiporter family.

It localises to the cell inner membrane. The catalysed reaction is 2 Na(+)(in) + 3 H(+)(out) = 2 Na(+)(out) + 3 H(+)(in). In terms of biological role, na(+)/H(+) antiporter that extrudes sodium in exchange for external protons. This Vibrio vulnificus (strain YJ016) protein is Na(+)/H(+) antiporter NhaB.